Consider the following 1413-residue polypeptide: Zinc finger SWIM domain-containing protein 8 (1413 aa).

Residues Ser-36, Ser-48, and Ser-53 each carry the phosphoserine modification. The segment at Arg-45 to Gly-65 is disordered. Residues Thr-55–Gly-65 show a composition bias toward gly residues. The SWIM-type zinc finger occupies Tyr-172–Ile-208. Residues Glu-600–Gln-817 form a disordered region. Residues His-604–Ser-625 show a composition bias toward polar residues. A compositionally biased stretch (gly residues) spans Ser-704–Ser-715. Position 724 is a phosphothreonine (Thr-724). Positions Ile-729–Leu-744 are enriched in polar residues. Phosphoserine is present on residues Ser-738, Ser-741, and Ser-745. The segment covering Gly-759 to Ala-794 has biased composition (low complexity). Residues Lys-795–Ala-811 show a composition bias toward basic and acidic residues. 2 positions are modified to phosphoserine: Ser-852 and Ser-1412.

This sequence belongs to the ZSWIM8 family. In terms of assembly, component of the SCF-like E3 ubiquitin-protein ligase complex which contains CUL3, RBX1, ELOB, ELOC and ZSWIM8. Interacts with DAB1.

It is found in the cytoplasm. The protein resides in the cytosol. It functions in the pathway protein modification; protein ubiquitination. Substrate recognition component of a SCF-like E3 ubiquitin-protein ligase complex that promotes target-directed microRNA degradation (TDMD), a process that mediates degradation of microRNAs (miRNAs). The SCF-like E3 ubiquitin-protein ligase complex acts by catalyzing ubiquitination and subsequent degradation of AGO proteins (AGO1, AGO2, AGO3 and/or AGO4), thereby exposing miRNAs for degradation. Specifically recognizes and binds AGO proteins when they are engaged with a TDMD target. May also acts as a regulator of axon guidance: specifically recognizes misfolded ROBO3 and promotes its ubiquitination and subsequent degradation. Plays an essential role for proper embryonic development of heart and lung. Controls protein quality of DAB1, a key signal molecule for brain development, thus protecting its signaling strength. Mechanistically, recognizes intrinsically disordered regions of DAB1 and eliminates misfolded DAB1 that cannot be properly phosphorylated. The polypeptide is Zinc finger SWIM domain-containing protein 8 (Bos taurus (Bovine)).